The sequence spans 418 residues: Probable serine hydroxymethyltransferase (418 aa).

Residues Leu118 and 122 to 124 contribute to the (6S)-5,6,7,8-tetrahydrofolate site; that span reads GHL. The residue at position 226 (Lys226) is an N6-(pyridoxal phosphate)lysine. (6S)-5,6,7,8-tetrahydrofolate is bound at residue 351-353; it reads SPF.

The protein belongs to the SHMT family. As to quaternary structure, homodimer. Pyridoxal 5'-phosphate serves as cofactor.

The protein resides in the cytoplasm. It catalyses the reaction (6R)-5,10-methylene-5,6,7,8-tetrahydrofolate + glycine + H2O = (6S)-5,6,7,8-tetrahydrofolate + L-serine. Its pathway is one-carbon metabolism; tetrahydrofolate interconversion. Its function is as follows. Catalyzes the reversible interconversion of serine and glycine with tetrahydrofolate (THF) serving as the one-carbon carrier. This reaction serves as the major source of one-carbon groups required for the biosynthesis of purines, thymidylate, methionine, and other important biomolecules. This Mesomycoplasma hyopneumoniae (strain 7448) (Mycoplasma hyopneumoniae) protein is Probable serine hydroxymethyltransferase.